We begin with the raw amino-acid sequence, 456 residues long: Histidine--tRNA ligase (456 aa).

This sequence belongs to the class-II aminoacyl-tRNA synthetase family. In terms of assembly, homodimer.

It is found in the cytoplasm. It carries out the reaction tRNA(His) + L-histidine + ATP = L-histidyl-tRNA(His) + AMP + diphosphate + H(+). The sequence is that of Histidine--tRNA ligase from Cupriavidus taiwanensis (strain DSM 17343 / BCRC 17206 / CCUG 44338 / CIP 107171 / LMG 19424 / R1) (Ralstonia taiwanensis (strain LMG 19424)).